Consider the following 295-residue polypeptide: F-box protein SKIP24 (295 aa).

Positions 19–66 (VKSSTFSYKDLCCISISSRRLFRLSCDDSLWDLLLVHDFPNHIVSASS) constitute an F-box; degenerate domain. Coiled coils occupy residues 82–129 (REKE…SSLQ) and 167–209 (EGRL…ESMK). The interval 217–245 (KSIRNGDQGSNGKTKKLKTSINYSGDQVS) is disordered. A compositionally biased stretch (polar residues) spans 235–245 (TSINYSGDQVS).

Part of a SCF (ASK-cullin-F-box) protein ligase complex. Interacts with SKP1A/ASK1 and SPK1B/ASK2.

It participates in protein modification; protein ubiquitination. In terms of biological role, component of SCF(ASK-cullin-F-box) E3 ubiquitin ligase complexes, which may mediate the ubiquitination and subsequent proteasomal degradation of target proteins. This Arabidopsis thaliana (Mouse-ear cress) protein is F-box protein SKIP24 (SKIP24).